A 1687-amino-acid chain; its full sequence is A-kinase anchor protein 12 (1687 aa).

Positions Met1–Ala108 are disordered. A lipid anchor (N-myristoyl glycine) is attached at Gly2. Ser11, Ser18, Ser22, and Ser27 each carry phosphoserine. A compositionally biased stretch (low complexity) spans Gly30–Ala48. A compositionally biased stretch (polar residues) spans Pro52 to Asn62. Residues Glu75–Asp88 are compositionally biased toward acidic residues. The segment covering Val89–Glu105 has biased composition (basic and acidic residues). Residues Ser136 and Ser204 each carry the phosphoserine modification. Disordered stretches follow at residues Ser175–Ser282 and Lys298–Lys355. Positions Ala213–Leu230 are enriched in basic and acidic residues. Phosphoserine occurs at positions 235 and 245. Acidic residues predominate over residues Gln247 to Glu259. Residues Lys254–Ser544 form an involved in PKC-binding region. Ser268, Ser271, Ser274, and Ser304 each carry phosphoserine. The span at Ser268–Ser282 shows a compositional bias: low complexity. Over residues Lys303–Glu321 the composition is skewed to basic and acidic residues. At Thr331 the chain carries Phosphothreonine. Residues Ala334–Thr344 show a composition bias toward acidic residues. Ser335 and Ser350 each carry phosphoserine. Tyr353 is subject to Phosphotyrosine. Ser371 carries the phosphoserine modification. Positions Val402 to Gly481 are disordered. A compositionally biased stretch (low complexity) spans Gly417–Glu426. Phosphoserine is present on Ser469. A compositionally biased stretch (basic and acidic residues) spans Pro470–Glu480. 3 positions are modified to phosphoserine: Ser491, Ser507, and Ser509. A disordered region spans residues Lys496–Ala828. The segment covering Gly499–Lys513 has biased composition (low complexity). Residues Leu514–Arg523 show a composition bias toward basic residues. The span at Glu533–Gly550 shows a compositional bias: basic and acidic residues. Phosphoserine occurs at positions 541, 544, 585, 599, 614, and 616. The AKAP CaM-binding 1 motif lies at Ile594 to Ser614. A compositionally biased stretch (basic and acidic residues) spans Arg612–Lys626. Polar residues predominate over residues Ala628–Glu639. A Phosphothreonine modification is found at Thr629. 4 positions are modified to phosphoserine: Ser631, Ser632, Ser635, and Ser638. A compositionally biased stretch (basic and acidic residues) spans Asp642 to Asp661. Phosphoserine occurs at positions 683, 684, and 685. Basic and acidic residues predominate over residues Asp697–Gly711. The span at Ala717–Gln726 shows a compositional bias: polar residues. Residues Gly727–Ser744 show a composition bias toward low complexity. A phosphoserine mark is found at Ser736, Ser748, Ser770, Ser771, and Ser789. The short motif at Val743–Leu763 is the AKAP CaM-binding 2 element. Residues Glu784–Gly804 carry the AKAP CaM-binding 3 motif. Residue Thr871 is modified to Phosphothreonine. A Phosphoserine modification is found at Ser873. Residues Glu959–Met981 are disordered. Lys1030 is covalently cross-linked (Glycyl lysine isopeptide (Lys-Gly) (interchain with G-Cter in SUMO1)). Residues Val1035–Gly1045 show a composition bias toward polar residues. Disordered regions lie at residues Val1035–Ala1105, Ala1125–Ala1221, Cys1277–Ala1361, and Thr1443–Glu1487. Ser1059 carries the phosphoserine modification. Positions Ser1130–Asp1157 are enriched in polar residues. Residues Gln1199–Leu1211 show a composition bias toward basic and acidic residues. Ser1289 bears the Phosphoserine mark. Residues Asp1298–Gln1310 show a composition bias toward basic and acidic residues. Ser1348, Ser1352, and Ser1354 each carry phosphoserine. The span at Gln1462–Glu1487 shows a compositional bias: basic and acidic residues. An RII-binding region spans residues Glu1498–Ile1511. Disordered regions lie at residues Glu1522–Ser1582 and Ile1599–Ser1687. Polar residues predominate over residues Tyr1530–Gln1547. Phosphoserine is present on residues Ser1543 and Ser1571. Residues Gln1618–Ser1630 are compositionally biased toward low complexity. Ser1637 is modified (phosphoserine). A compositionally biased stretch (basic and acidic residues) spans Leu1645–Ser1687.

As to quaternary structure, binds to dimeric RII-alpha regulatory subunit of PKC. In terms of processing, phosphorylated by PKC (in vitro).

Its subcellular location is the cytoplasm. The protein localises to the cytoskeleton. It is found in the membrane. Anchoring protein that mediates the subcellular compartmentation of protein kinase A (PKA) and protein kinase C (PKC). The protein is A-kinase anchor protein 12 (Akap12) of Rattus norvegicus (Rat).